The sequence spans 63 residues: Large ribosomal subunit protein uL29 (63 aa).

The protein belongs to the universal ribosomal protein uL29 family.

This is Large ribosomal subunit protein uL29 from Azotobacter vinelandii (strain DJ / ATCC BAA-1303).